A 101-amino-acid polypeptide reads, in one-letter code: MILEHVLVLSAYLFLIGLYGLITSRNMVRALMCLELILNAVNMNFVTFSDFFDNSQLKGEIFCIFVIAIAAAEAAIGLAIVSSIYRNRKSIRINQSTLLNK.

The next 3 membrane-spanning stretches (helical) occupy residues 2–22 (ILEH…YGLI), 32–52 (MCLE…SDFF), and 61–81 (IFCI…LAIV).

The protein belongs to the complex I subunit 4L family. NDH is composed of at least 16 different subunits, 5 of which are encoded in the nucleus.

It is found in the plastid. The protein localises to the chloroplast thylakoid membrane. It carries out the reaction a plastoquinone + NADH + (n+1) H(+)(in) = a plastoquinol + NAD(+) + n H(+)(out). It catalyses the reaction a plastoquinone + NADPH + (n+1) H(+)(in) = a plastoquinol + NADP(+) + n H(+)(out). Its function is as follows. NDH shuttles electrons from NAD(P)H:plastoquinone, via FMN and iron-sulfur (Fe-S) centers, to quinones in the photosynthetic chain and possibly in a chloroplast respiratory chain. The immediate electron acceptor for the enzyme in this species is believed to be plastoquinone. Couples the redox reaction to proton translocation, and thus conserves the redox energy in a proton gradient. This Arabidopsis thaliana (Mouse-ear cress) protein is NAD(P)H-quinone oxidoreductase subunit 4L, chloroplastic.